Reading from the N-terminus, the 1113-residue chain is Protein KIBRA (1113 aa).

WW domains lie at 6–39 (LPLP…DPRD) and 53–86 (DELP…DPRV). 2 coiled-coil regions span residues 107–193 (LSAQ…RGFQ) and 293–431 (NSNN…SSMQ). Residue Ser-141 is modified to Phosphoserine. Disordered stretches follow at residues 429-448 (SMQS…SRGS) and 522-547 (RSLS…SPPC). The segment covering 522-532 (RSLSGTPKSMT) has biased composition (polar residues). Positions 533–542 (SLSPRSSLSS) are enriched in low complexity. Ser-535 is subject to Phosphoserine. Residue Ser-542 is modified to Phosphoserine; by CDK1. One can recognise a C2 domain in the interval 658–781 (GATRIQIALK…RSGERSTRWY (124 aa)). Positions 825–975 (LEKRQEGRSS…RSVRMKRPSS (151 aa)) are disordered. Residues 839–1113 (EDSWRYEETS…NIPALSADDV (275 aa)) are interaction with histone H3. A compositionally biased stretch (acidic residues) spans 847 to 870 (TSENEAVAEEEEEEVEEEEGEEDV). Residue Ser-899 is modified to Phosphoserine. Thr-912 bears the Phosphothreonine mark. Residues 924-938 (IIRSKTFSPGPQSQY) show a composition bias toward polar residues. The residue at position 927 (Ser-927) is a Phosphoserine. Thr-929 carries the post-translational modification Phosphothreonine. Position 931 is a phosphoserine; by CDK1 (Ser-931). At Ser-947 the chain carries Phosphoserine. Interaction with PRKCZ stretches follow at residues 953 to 996 (SKKP…LDLQ) and 956 to 975 (PPFV…RPSS). 2 positions are modified to phosphoserine; by PKC/PRKCZ: Ser-975 and Ser-978. Residues 1001–1032 (WHSQLTQEISVLKELKEQLEQAKSHGEKELPQ) adopt a coiled-coil conformation. Residues 1111 to 1113 (DDV) carry the ADDV motif motif.

It belongs to the WWC family. KIBRA subfamily. In terms of assembly, homodimer. Forms heterodimers with WWC2 and WWC3. Interacts with DDN. Interacts with DYNLL1 and histone H3. The interaction with DYNLL1 is mandatory for the recruitment and transactivation functions of ESR1 or DYNLL1 to the target chromatin and the interaction with histone H3 ensures proper regulatory interaction of WWC1-DYNLL1-ESR1 complexes with target chromatin. Interacts (via WW domains) with DDR1 (via PPxY motif) in a collagen-regulated manner. Interacts with PRKCZ (via the protein kinase domain). Forms a tripartite complex with DDR1 and PRKCZ, but predominantly in the absence of collagen. Interacts (via the ADDV motif) with PATJ (via PDZ domain 8). Interacts (via WW domains) with SYNPO (via PPxY motifs). Interacts with NF2 and SNX4. Interacts with DLC1 and PRKCZ. Interacts (via WW domains) with LATS1 and LATS2. In terms of processing, phosphorylation at Ser-542 and Ser-931 by CDK1 in response to spindle damage stress regulates mitotic exit, these two sites are dephosphorylated by CDC14B. As to expression, expressed in mammary epithelial cells and breast cancer cell lines. Found in the luminal epithelium surrounding the ducts in the normal breast. In the brain, expressed in somatodendritic compartment of neurons in the cortex and hippocampus and in the cerebellum it is found in the Purkinje cells and some granule cells (at protein level). Detected in brain, heart, colon and kidney. In the kidney, expressed in glomerular podocytes, in some tubules and in the collecting duct.

The protein localises to the cytoplasm. The protein resides in the perinuclear region. Its subcellular location is the nucleus. It is found in the cell projection. It localises to the ruffle membrane. The protein localises to the cytosol. Its function is as follows. Regulator of the Hippo signaling pathway, also known as the Salvador-Warts-Hippo (SWH) pathway. Enhances phosphorylation of LATS1 and YAP1 and negatively regulates cell proliferation and organ growth due to a suppression of the transcriptional activity of YAP1, the major effector of the Hippo pathway. Along with NF2 can synergistically induce the phosphorylation of LATS1 and LATS2 and function in the regulation of Hippo signaling pathway. Acts as a transcriptional coactivator of ESR1 which plays an essential role in DYNLL1-mediated ESR1 transactivation. Regulates collagen-stimulated activation of the ERK/MAPK cascade. Modulates directional migration of podocytes. Plays a role in cognition and memory performance. Plays an important role in regulating AMPA-selective glutamate receptors (AMPARs) trafficking underlying synaptic plasticity and learning. This Homo sapiens (Human) protein is Protein KIBRA.